Reading from the N-terminus, the 305-residue chain is PI-PLC X domain-containing protein 1 (305 aa).

Positions 1–24 are cleaved as a signal peptide; sequence MSMSTLRHFLWLGALLLATIQVSA. Residues 25–189 enclose the PI-PLC X-box domain; it reads LPTAQDLICN…RLIVFVDSKA (165 aa). Catalysis depends on residues H53 and H97. A glycan (N-linked (GlcNAc...) asparagine) is linked at N237.

It is found in the secreted. The sequence is that of PI-PLC X domain-containing protein 1 from Arthroderma benhamiae (strain ATCC MYA-4681 / CBS 112371) (Trichophyton mentagrophytes).